Consider the following 281-residue polypeptide: 39kDa core protein OPG130 (281 aa).

A compositionally biased stretch (polar residues) spans 1–22; sequence MDFFNKFSQGLAESSTPKSSIY. 2 disordered regions span residues 1 to 33 and 149 to 186; these read MDFF…DTKK and NKDQ…TPTV. Positions 24–33 are enriched in basic and acidic residues; that stretch reads SEEKDPDTKK. The segment covering 155 to 175 has biased composition (low complexity); sequence TTPPSTQPSQTLPTTTCTQQS. The span at 176–186 shows a compositional bias: polar residues; sequence DGSISCTTPTV.

It belongs to the orthopoxvirus OPG130 family. In terms of assembly, interacts with OPG136 and its cleaved form. Its phosphorylation state is regulated by the OPG054 kinase and the OPG106 phosphatase.

It is found in the virion. It localises to the host endoplasmic reticulum-Golgi intermediate compartment membrane. Component of the virion core. Participates in virion assembly. The sequence is that of 39kDa core protein OPG130 (OPG130) from Cynomys gunnisoni (Gunnison's prairie dog).